A 1021-amino-acid polypeptide reads, in one-letter code: Inversin (1021 aa).

ANK repeat units follow at residues Q7 to S36, F40 to K69, S73 to L102, E106 to T137, N141 to I170, E174 to L206, E213 to A243, L247 to I276, Q281 to E310, E314 to I343, Y349 to P378, M382 to L411, D415 to L444, A448 to I477, E481 to H510, and E516 to A546. Positions R483–N491 match the D-box 1 motif. The region spanning Q548–R577 is the IQ 1 domain. Composition is skewed to basic and acidic residues over residues E579 to E598 and S653 to E669. 3 disordered regions span residues E579–S602, K632–P691, and G704–S868. Residues P722–A731 are compositionally biased toward low complexity. Composition is skewed to polar residues over residues G759 to G781 and T791 to T802. Basic and acidic residues predominate over residues R803–T866. Residues K862–N870 carry the D-box 2 motif. Residues K869 to K898 form the IQ 2 domain.

Binds calmodulin via its IQ domains.

Its subcellular location is the cytoplasm. It localises to the cytoskeleton. Its function is as follows. Required for normal renal development and establishment of left-right axis. Probably acts as a molecular switch between different Wnt signaling pathways. Inhibits the canonical Wnt pathway by targeting cytoplasmic disheveled for degradation by the ubiquitin-proteasome. This suggests that it is required in renal development to oppose the repression of terminal differentiation of tubular epithelial cells by Wnt signaling. The protein is Inversin (invs) of Danio rerio (Zebrafish).